The sequence spans 534 residues: BEN domain-containing protein 4 (534 aa).

Disordered stretches follow at residues 1–24 (MEEE…RSPY), 48–128 (ELPH…AASS), and 287–322 (VHTL…EEGY). Positions 53–63 (RAPPPPPPPFA) are enriched in pro residues. Positions 69 to 83 (SISSSEPPPQQFQAQ) are enriched in polar residues. Residues 91-109 (GRAAAAASSSSPSCTPATS) are compositionally biased toward low complexity. Positions 295–310 (SPATSESHGHPSSSTL) are enriched in polar residues. Positions 311–321 (PEEEEEEDEEG) are enriched in acidic residues. Residues 324-351 (PRCQELEQEVISLQQENEELRRKLESIP) adopt a coiled-coil conformation. One can recognise a BEN domain in the interval 390 to 498 (NYPVYITSKQ…DAVGHARQGR (109 aa)).

The polypeptide is BEN domain-containing protein 4 (BEND4) (Homo sapiens (Human)).